Reading from the N-terminus, the 250-residue chain is Ribonuclease PH (250 aa).

Phosphate is bound by residues Arg-86 and 124–126; that span reads GTR.

It belongs to the RNase PH family. In terms of assembly, homohexameric ring arranged as a trimer of dimers.

It carries out the reaction tRNA(n+1) + phosphate = tRNA(n) + a ribonucleoside 5'-diphosphate. Phosphorolytic 3'-5' exoribonuclease that plays an important role in tRNA 3'-end maturation. Removes nucleotide residues following the 3'-CCA terminus of tRNAs; can also add nucleotides to the ends of RNA molecules by using nucleoside diphosphates as substrates, but this may not be physiologically important. Probably plays a role in initiation of 16S rRNA degradation (leading to ribosome degradation) during starvation. In Exiguobacterium sibiricum (strain DSM 17290 / CCUG 55495 / CIP 109462 / JCM 13490 / 255-15), this protein is Ribonuclease PH.